The following is a 57-amino-acid chain: Protein translocase subunit SecE (57 aa).

The chain crosses the membrane as a helical span at residues 30 to 50; that stretch reads LIAGAGIVFVGFLGFLIFAIM.

The protein belongs to the SecE/SEC61-gamma family. In terms of assembly, component of the Sec protein translocase complex. Heterotrimer consisting of SecY (alpha), SecG (beta) and SecE (gamma) subunits. The heterotrimers can form oligomers, although 1 heterotrimer is thought to be able to translocate proteins. Interacts with the ribosome. May interact with SecDF, and other proteins may be involved.

It is found in the cell membrane. Essential subunit of the Sec protein translocation channel SecYEG. Clamps together the 2 halves of SecY. May contact the channel plug during translocation. The protein is Protein translocase subunit SecE of Haloquadratum walsbyi (strain DSM 16790 / HBSQ001).